Reading from the N-terminus, the 181-residue chain is Protein FAM237A (181 aa).

The first 33 residues, 1-33 (MADPGNRGGIHRPLSFTCSLLIVGMCCVSPFFC), serve as a signal peptide directing secretion. Leucine 113 bears the Leucine amide mark. Positions 114-181 (GRRQLVGEEE…GKVNLEIKRK (68 aa)) are cleaved as a propeptide — removed in the mature form.

The active form requires C-terminal amidation and disulfide bond formation. As to expression, expressed in the pituitary, testis, and heart and at lower levels in the brain.

The protein resides in the secreted. Its function is as follows. May be capable of activating GPR83 via the GNAQ signaling pathway. The sequence is that of Protein FAM237A from Homo sapiens (Human).